Consider the following 473-residue polypeptide: ATP synthase subunit beta (473 aa).

Residue Gly-158 to Thr-165 coordinates ATP.

It belongs to the ATPase alpha/beta chains family. As to quaternary structure, F-type ATPases have 2 components, CF(1) - the catalytic core - and CF(0) - the membrane proton channel. CF(1) has five subunits: alpha(3), beta(3), gamma(1), delta(1), epsilon(1). CF(0) has three main subunits: a(1), b(2) and c(9-12). The alpha and beta chains form an alternating ring which encloses part of the gamma chain. CF(1) is attached to CF(0) by a central stalk formed by the gamma and epsilon chains, while a peripheral stalk is formed by the delta and b chains.

The protein resides in the cell membrane. The enzyme catalyses ATP + H2O + 4 H(+)(in) = ADP + phosphate + 5 H(+)(out). In terms of biological role, produces ATP from ADP in the presence of a proton gradient across the membrane. The catalytic sites are hosted primarily by the beta subunits. The polypeptide is ATP synthase subunit beta (Bacillus pumilus (strain SAFR-032)).